The following is a 134-amino-acid chain: Neuropeptide-like peptide 11 (134 aa).

A signal peptide spans 1 to 20 (MMSTLALVSLAIFGIAVVCA). A propeptide spanning residues 21-106 (APKPATVPVA…YNRLIDAGKK (86 aa)) is cleaved from the precursor. Position 131 is an alanine amide (Ala-131).

This Caenorhabditis elegans protein is Neuropeptide-like peptide 11 (nlp-11).